The sequence spans 502 residues: MKRVQTAEEREREAKKLRLLEELEDTWLPYLTPKDDEFYQQWQLKYPKLVFREAGSIPEELHKEVPEAFLTLHKHGCLFRDVVRIQGKDVLTPVSRILIGDPGCTYKYLNTRLFTVPWPVKGCTVKYTEAEIAAACQTFLKLNDYLQVETIQALEELAVREKANEDAVPLCMAEFPRAGVGPSCDDEVDLKSRAAYNVTLLNFMDPQKMPYLKEEPYFGMGKMAVSWHHDENLVDRSAVAVYSYSCEGSEDESEDESSFEGRDPDTWHVGFKISWDIETPGLTIPLHQGDCYFMLDDLNATHQHCVLAGSQPRFSSTHRVAECSTGTLDYILERCQLALQNVLNDSDDGDVSLKSFDPAVLKQGEEIHNEVEFEWLRQFWFQGNRYKLCTDWWCEPMTHLEGLWKKMESMTNAVLREVKREGLPVEQRSEILSAILVPLTVRQNLRKEWHARCQSRVVRTLPVQQKPDCRPYWEKDDPSMPLPFDLTDVVSELRGQLLEARS.

Residues 32–324 (TPKDDEFYQQ…SSTHRVAECS (293 aa)) are fe2OG dioxygenase domain. Residues Arg-96 and Tyr-108 each coordinate substrate. Asn-202 contacts 2-oxoglutarate. A loop L1; predicted to block binding of double-stranded DNA or RNA region spans residues 210 to 221 (PYLKEEPYFGMG). An N6-acetyllysine modification is found at Lys-213. His-228 and Asp-230 together coordinate Fe cation. Residue 228–231 (HHDE) participates in substrate binding. Tyr-292 lines the 2-oxoglutarate pocket. His-304 is a binding site for Fe cation. Residues 313 to 315 (RFS), Thr-317, and Arg-319 each bind 2-oxoglutarate.

The protein belongs to the fto family. Monomer. May also exist as homodimer. Fe(2+) is required as a cofactor. In terms of tissue distribution, ubiquitous. Detected in brain, brain cortex, hypothalamus, cerebellum, liver, pancreas, heart, kidney, white adipose tissue and skeletal muscle. Most abundant in the brain, particularly in hypothalamic nuclei governing energy balance.

It localises to the nucleus. Its subcellular location is the nucleus speckle. It is found in the cytoplasm. The catalysed reaction is a 5'-end (N(7)-methyl 5'-triphosphoguanosine)-(N(6),2'-O-dimethyladenosine) in mRNA + 2-oxoglutarate + O2 = a 5'-end (N(7)-methyl 5'-triphosphoguanosine)-(2'-O-methyladenosine) in mRNA + formaldehyde + succinate + CO2. It catalyses the reaction an N(6)-methyladenosine in mRNA + 2-oxoglutarate + O2 = an adenosine in mRNA + formaldehyde + succinate + CO2. It carries out the reaction N(6)-methyladenosine in U6 snRNA + 2-oxoglutarate + O2 = adenosine in U6 snRNA + formaldehyde + succinate + CO2. The enzyme catalyses a 5'-end (N(7)-methyl 5'-triphosphoguanosine)-(N(6),2'-O-dimethyladenosine) in U6 snRNA + 2-oxoglutarate + O2 = a 5'-end (N(7)-methyl 5'-triphosphoguanosine)-(2'-O-methyladenosine) in U6 snRNA + formaldehyde + succinate + CO2. The catalysed reaction is an N(1)-methyladenosine in tRNA + 2-oxoglutarate + O2 = an adenosine in tRNA + formaldehyde + succinate + CO2. With respect to regulation, activated by ascorbate. Inhibited by N-oxalylglycine, fumarate and succinate. Functionally, RNA demethylase that mediates oxidative demethylation of different RNA species, such as mRNAs, tRNAs and snRNAs, and acts as a regulator of fat mass, adipogenesis and energy homeostasis. Specifically demethylates N(6)-methyladenosine (m6A) RNA, the most prevalent internal modification of messenger RNA (mRNA) in higher eukaryotes. M6A demethylation by FTO affects mRNA expression and stability. Also able to demethylate m6A in U6 small nuclear RNA (snRNA). Mediates demethylation of N(6),2'-O-dimethyladenosine cap (m6A(m)), by demethylating the N(6)-methyladenosine at the second transcribed position of mRNAs and U6 snRNA. Demethylation of m6A(m) in the 5'-cap by FTO affects mRNA stability by promoting susceptibility to decapping. Also acts as a tRNA demethylase by removing N(1)-methyladenine from various tRNAs. Has no activity towards 1-methylguanine. Has no detectable activity towards double-stranded DNA. Also able to repair alkylated DNA and RNA by oxidative demethylation: demethylates single-stranded RNA containing 3-methyluracil, single-stranded DNA containing 3-methylthymine and has low demethylase activity towards single-stranded DNA containing 1-methyladenine or 3-methylcytosine. Ability to repair alkylated DNA and RNA is however unsure in vivo. Involved in the regulation of fat mass, adipogenesis and body weight, thereby contributing to the regulation of body size and body fat accumulation. Involved in the regulation of thermogenesis and the control of adipocyte differentiation into brown or white fat cells. Regulates activity of the dopaminergic midbrain circuitry via its ability to demethylate m6A in mRNAs. The polypeptide is Alpha-ketoglutarate-dependent dioxygenase FTO (Mus musculus (Mouse)).